The chain runs to 121 residues: Large ribosomal subunit protein bL20 (121 aa).

The protein belongs to the bacterial ribosomal protein bL20 family.

Its function is as follows. Binds directly to 23S ribosomal RNA and is necessary for the in vitro assembly process of the 50S ribosomal subunit. It is not involved in the protein synthesizing functions of that subunit. This chain is Large ribosomal subunit protein bL20, found in Polynucleobacter asymbioticus (strain DSM 18221 / CIP 109841 / QLW-P1DMWA-1) (Polynucleobacter necessarius subsp. asymbioticus).